The sequence spans 380 residues: Protein COS12 (380 aa).

Residues 1-70 are Cytoplasmic-facing; it reads MDGAKFENTV…WKIRGKRHYL (70 aa). The chain crosses the membrane as a helical span at residues 71-91; the sequence is VIVTALMFEVLYFLWTYSYIF. Topologically, residues 92 to 231 are extracellular; sequence RERTLGKQVS…KLLWAFKEVT (140 aa). Residues 232–252 form a helical membrane-spanning segment; sequence IMNSRFAFFSIAYLNGLLTIP. Residues 253-257 lie on the Cytoplasmic side of the membrane; sequence RLRNS. The helical transmembrane segment at 258–278 threads the bilayer; it reads LHILYVCAVLSSMIIEYLIGI. Over 279–380 the chain is Extracellular; it reads DKFRFKSMNL…KEAQSACNDV (102 aa).

Belongs to the DUP/COS family.

The protein resides in the membrane. The sequence is that of Protein COS12 (COS12) from Saccharomyces cerevisiae (strain ATCC 204508 / S288c) (Baker's yeast).